Reading from the N-terminus, the 249-residue chain is uncharacterized protein (249 aa).

A coiled-coil region spans residues 30–65; it reads KVDKLKKLEIKKLEDQKKLKEQEEKHRLTLIRLANA. Positions 66–97 are disordered; the sequence is PPQTNSINNNNNNNNNIKTNRPPLIYGEDKDK.

This is an uncharacterized protein from Dictyostelium discoideum (Social amoeba).